We begin with the raw amino-acid sequence, 171 residues long: Phosphopantetheine adenylyltransferase (171 aa).

Thr9 contributes to the substrate binding site. Residues 9 to 10 (TF) and His17 each bind ATP. Residues Lys41, Leu73, and Arg87 each contribute to the substrate site. Residues 88–90 (GLR), Glu98, and 123–129 (YQFISGT) each bind ATP.

It belongs to the bacterial CoaD family. In terms of assembly, homohexamer. Mg(2+) is required as a cofactor.

The protein resides in the cytoplasm. The enzyme catalyses (R)-4'-phosphopantetheine + ATP + H(+) = 3'-dephospho-CoA + diphosphate. It participates in cofactor biosynthesis; coenzyme A biosynthesis; CoA from (R)-pantothenate: step 4/5. Reversibly transfers an adenylyl group from ATP to 4'-phosphopantetheine, yielding dephospho-CoA (dPCoA) and pyrophosphate. This Paraburkholderia phytofirmans (strain DSM 17436 / LMG 22146 / PsJN) (Burkholderia phytofirmans) protein is Phosphopantetheine adenylyltransferase.